The following is a 367-amino-acid chain: S-adenosylmethionine:tRNA ribosyltransferase-isomerase (367 aa).

This sequence belongs to the QueA family. As to quaternary structure, monomer.

Its subcellular location is the cytoplasm. The enzyme catalyses 7-aminomethyl-7-carbaguanosine(34) in tRNA + S-adenosyl-L-methionine = epoxyqueuosine(34) in tRNA + adenine + L-methionine + 2 H(+). The protein operates within tRNA modification; tRNA-queuosine biosynthesis. Its function is as follows. Transfers and isomerizes the ribose moiety from AdoMet to the 7-aminomethyl group of 7-deazaguanine (preQ1-tRNA) to give epoxyqueuosine (oQ-tRNA). This is S-adenosylmethionine:tRNA ribosyltransferase-isomerase from Beijerinckia indica subsp. indica (strain ATCC 9039 / DSM 1715 / NCIMB 8712).